The chain runs to 161 residues: Small ribosomal subunit protein uS9 (161 aa).

Belongs to the universal ribosomal protein uS9 family.

This Bartonella bacilliformis (strain ATCC 35685 / KC583 / Herrer 020/F12,63) protein is Small ribosomal subunit protein uS9.